Here is a 114-residue protein sequence, read N- to C-terminus: UPF0145 protein TT_C1581 (114 aa).

Belongs to the UPF0145 family.

This chain is UPF0145 protein TT_C1581, found in Thermus thermophilus (strain ATCC BAA-163 / DSM 7039 / HB27).